Here is a 466-residue protein sequence, read N- to C-terminus: MADGTDQKSSNQMWGGRFASGPSAIMEEINASIGFDKKLYAQDIRGSIAHATMLAEKGIISQEDKEKIVHGLNTILSEIEAGTFEFSRKLEDIHMNIEARLATLIGTAAGRLHTARSRNDQVALDFRLWVKEELQKTEGMLTALIAAFLDRAEENADTVMPGFTHLQTAQPVTFGHHCMAYVEMFGRDRARVRHAIEHLDESPIGAAALAGTGYPIDRHMTAKALGFREPTRNSIDTVSDRDFALEFLSIASICATHLSRLAEEIVIWSTPQFGFIRLSDAFSTGSSIMPQKKNPDAAELVRAKTGRINGSLVALLTVMKGLPLAYSKDMQEDKEQVFDSAESLELAIAAMTGMIRDLEVRKDRMRAAAGSGYSTATDLADWLVREAGLPFRDAHHVTGNAVALAEKKGCDLADLSLEELQAIHPDITNGIFDVLSVEASVASRTSFGGTAPSEVRKQIAWWRGRN.

It belongs to the lyase 1 family. Argininosuccinate lyase subfamily.

It is found in the cytoplasm. The enzyme catalyses 2-(N(omega)-L-arginino)succinate = fumarate + L-arginine. It participates in amino-acid biosynthesis; L-arginine biosynthesis; L-arginine from L-ornithine and carbamoyl phosphate: step 3/3. This Agrobacterium fabrum (strain C58 / ATCC 33970) (Agrobacterium tumefaciens (strain C58)) protein is Argininosuccinate lyase 1.